The sequence spans 317 residues: Acetyl-coenzyme A carboxylase carboxyl transferase subunit alpha (317 aa).

A CoA carboxyltransferase C-terminal domain is found at 33 to 294 (NINKEINCLR…KNRILKDLKE (262 aa)).

It belongs to the AccA family. In terms of assembly, acetyl-CoA carboxylase is a heterohexamer composed of biotin carboxyl carrier protein (AccB), biotin carboxylase (AccC) and two subunits each of ACCase subunit alpha (AccA) and ACCase subunit beta (AccD).

The protein resides in the cytoplasm. The catalysed reaction is N(6)-carboxybiotinyl-L-lysyl-[protein] + acetyl-CoA = N(6)-biotinyl-L-lysyl-[protein] + malonyl-CoA. Its pathway is lipid metabolism; malonyl-CoA biosynthesis; malonyl-CoA from acetyl-CoA: step 1/1. Component of the acetyl coenzyme A carboxylase (ACC) complex. First, biotin carboxylase catalyzes the carboxylation of biotin on its carrier protein (BCCP) and then the CO(2) group is transferred by the carboxyltransferase to acetyl-CoA to form malonyl-CoA. The chain is Acetyl-coenzyme A carboxylase carboxyl transferase subunit alpha from Wigglesworthia glossinidia brevipalpis.